The sequence spans 223 residues: Phosphoribosylformylglycinamidine synthase subunit PurQ (223 aa).

The Glutamine amidotransferase type-1 domain occupies 2-223 (KTAIIQLPGL…FQSALELAKG (222 aa)). C86 serves as the catalytic Nucleophile. Catalysis depends on residues H196 and E198.

In terms of assembly, part of the FGAM synthase complex composed of 1 PurL, 1 PurQ and 2 PurS subunits.

The protein localises to the cytoplasm. It carries out the reaction N(2)-formyl-N(1)-(5-phospho-beta-D-ribosyl)glycinamide + L-glutamine + ATP + H2O = 2-formamido-N(1)-(5-O-phospho-beta-D-ribosyl)acetamidine + L-glutamate + ADP + phosphate + H(+). It catalyses the reaction L-glutamine + H2O = L-glutamate + NH4(+). It functions in the pathway purine metabolism; IMP biosynthesis via de novo pathway; 5-amino-1-(5-phospho-D-ribosyl)imidazole from N(2)-formyl-N(1)-(5-phospho-D-ribosyl)glycinamide: step 1/2. Functionally, part of the phosphoribosylformylglycinamidine synthase complex involved in the purines biosynthetic pathway. Catalyzes the ATP-dependent conversion of formylglycinamide ribonucleotide (FGAR) and glutamine to yield formylglycinamidine ribonucleotide (FGAM) and glutamate. The FGAM synthase complex is composed of three subunits. PurQ produces an ammonia molecule by converting glutamine to glutamate. PurL transfers the ammonia molecule to FGAR to form FGAM in an ATP-dependent manner. PurS interacts with PurQ and PurL and is thought to assist in the transfer of the ammonia molecule from PurQ to PurL. This chain is Phosphoribosylformylglycinamidine synthase subunit PurQ, found in Bartonella henselae (strain ATCC 49882 / DSM 28221 / CCUG 30454 / Houston 1) (Rochalimaea henselae).